The following is a 91-amino-acid chain: Large ribosomal subunit protein uL22 (91 aa).

It belongs to the universal ribosomal protein uL22 family. As to quaternary structure, part of the 50S ribosomal subunit.

In terms of biological role, this protein binds specifically to 23S rRNA; its binding is stimulated by other ribosomal proteins, e.g. L4, L17, and L20. It is important during the early stages of 50S assembly. It makes multiple contacts with different domains of the 23S rRNA in the assembled 50S subunit and ribosome. Its function is as follows. The globular domain of the protein is located near the polypeptide exit tunnel on the outside of the subunit, while an extended beta-hairpin is found that lines the wall of the exit tunnel in the center of the 70S ribosome. This is Large ribosomal subunit protein uL22 (rplV) from Clover yellow edge phytoplasma.